The sequence spans 426 residues: Serine--tRNA ligase (426 aa).

235 to 237 (TAE) provides a ligand contact to L-serine. 266-268 (RRE) contributes to the ATP binding site. Residue Glu289 coordinates L-serine. 353 to 356 (EISS) is a binding site for ATP. An L-serine-binding site is contributed by Ser389.

It belongs to the class-II aminoacyl-tRNA synthetase family. Type-1 seryl-tRNA synthetase subfamily. In terms of assembly, homodimer. The tRNA molecule binds across the dimer.

It is found in the cytoplasm. The catalysed reaction is tRNA(Ser) + L-serine + ATP = L-seryl-tRNA(Ser) + AMP + diphosphate + H(+). It catalyses the reaction tRNA(Sec) + L-serine + ATP = L-seryl-tRNA(Sec) + AMP + diphosphate + H(+). Its pathway is aminoacyl-tRNA biosynthesis; selenocysteinyl-tRNA(Sec) biosynthesis; L-seryl-tRNA(Sec) from L-serine and tRNA(Sec): step 1/1. Its function is as follows. Catalyzes the attachment of serine to tRNA(Ser). Is also able to aminoacylate tRNA(Sec) with serine, to form the misacylated tRNA L-seryl-tRNA(Sec), which will be further converted into selenocysteinyl-tRNA(Sec). In Nostoc punctiforme (strain ATCC 29133 / PCC 73102), this protein is Serine--tRNA ligase.